Reading from the N-terminus, the 686-residue chain is Eomesodermin homolog (686 aa).

Positions 27–46 (GGSGGSAGHLPSAAPSPQKL) are disordered. Residues 34-43 (GHLPSAAPSP) are compositionally biased toward low complexity. Ser107 carries the phosphoserine modification. The T-box DNA-binding region spans 276 to 456 (LWLKFHRHQT…HNPFAKGFRD (181 aa)). The interval 571–686 (AMAGWGGRGS…GGYYAFYTTP (116 aa)) is required for transcription activation. The disordered stretch occupies residues 639-686 (ACKRRRLSPSNSSNENSPSIKCEDINAEEYSKDTSKGMGGYYAFYTTP). The span at 646 to 657 (SPSNSSNENSPS) shows a compositional bias: low complexity. The segment covering 659–673 (KCEDINAEEYSKDTS) has biased composition (basic and acidic residues).

Expressed in CD8+ T-cells.

It localises to the nucleus. In terms of biological role, functions as a transcriptional activator playing a crucial role during development. Functions in trophoblast differentiation and later in gastrulation, regulating both mesoderm delamination and endoderm specification. Plays a role in brain development being required for the specification and the proliferation of the intermediate progenitor cells and their progeny in the cerebral cortex. Required for differentiation and migration of unipolar dendritic brush cells. Also involved in the differentiation of CD8+ T-cells during immune response regulating the expression of lytic effector genes. The chain is Eomesodermin homolog (EOMES) from Homo sapiens (Human).